The primary structure comprises 330 residues: NmrA-like family domain-containing oxidoreductase notO (330 aa).

NADP(+) is bound by residues 12 to 17, 38 to 42, 59 to 60, 80 to 82, and 160 to 163; these read VGIGSL, HHFAQ, RS, IEA, and LGGG. Residues 12 to 32 form a helical membrane-spanning segment; that stretch reads VGIGSLPAGLVALFMGATSGI. Positions 158–202 are interaction with ASS1; that stretch reads SVLGGGLESPLNEQDLDLRDPKNWTFWSSSMHSGTMGTLTLERIA. N-linked (GlcNAc...) asparagine glycosylation is found at N180 and N207.

It belongs to the NmrA-type oxidoreductase family.

Its subcellular location is the membrane. NmrA-like family domain-containing oxidoreductase; part of the gene cluster that mediates the biosynthesis of notoamide, a fungal indole alkaloid that belongs to a family of natural products containing a characteristic bicyclo[2.2.2]diazaoctane core. The first step of notoamide biosynthesis involves coupling of L-proline and L-tryptophan by the bimodular NRPS notE, to produce cyclo-L-tryptophan-L-proline called brevianamide F. The reverse prenyltransferase notF then acts as a deoxybrevianamide E synthase and converts brevianamide F to deoxybrevianamide E via reverse prenylation at C-2 of the indole ring leading to the bicyclo[2.2.2]diazaoctane core. Deoxybrevianamide E is further hydroxylated at C-6 of the indole ring, likely catalyzed by the cytochrome P450 monooxygenase notG, to yield 6-hydroxy-deoxybrevianamide E. 6-hydroxy-deoxybrevianamide E is a specific substrate of the prenyltransferase notC for normal prenylation at C-7 to produce 6-hydroxy-7-prenyl-deoxybrevianamide, also called notoamide S. As the proposed pivotal branching point in notoamide biosynthesis, notoamide S can be diverted to notoamide E through an oxidative pyran ring closure putatively catalyzed by either notH cytochrome P450 monooxygenase or the notD FAD-linked oxidoreductase. This step would be followed by an indole 2,3-epoxidation-initiated pinacol-like rearrangement catalyzed by the notB FAD-dependent monooxygenase leading to the formation of notoamide C and notoamide D. On the other hand notoamide S is converted to notoamide T by notH (or notD), a bifunctional oxidase that also functions as the intramolecular Diels-Alderase responsible for generation of (+)-notoamide T. To generate antipodal (-)-notoaminide T, notH' (or notD') in Aspergillus versicolor is expected to catalyze a Diels-Alder reaction leading to the opposite stereochemistry. The remaining oxidoreductase notD (or notH) likely catalyzes the oxidative pyran ring formation to yield (+)-stephacidin A. The FAD-dependent monooxygenase notI is highly similar to notB and is predicted to catalyze a similar conversion from (+)-stephacidin A to (-)-notoamide B via the 2,3-epoxidation of (+)-stephacidin A followed by a pinacol-type rearrangement. Finally, it remains unclear which enzyme could be responsible for the final hydroxylation steps leading to notoamide A and sclerotiamide. The function of notO in the notoamide biosynthesis has not been determined yet. This chain is NmrA-like family domain-containing oxidoreductase notO, found in Aspergillus sp. (strain MF297-2).